The sequence spans 404 residues: Cytoplasmic tRNA 2-thiolation protein 2 (404 aa).

This sequence belongs to the CTU2/NCS2 family.

It localises to the cytoplasm. Its pathway is tRNA modification; 5-methoxycarbonylmethyl-2-thiouridine-tRNA biosynthesis. Plays a central role in 2-thiolation of mcm(5)S(2)U at tRNA wobble positions of tRNA(Lys), tRNA(Glu) and tRNA(Gln). May act by forming a heterodimer with NCS6/CTU1 that ligates sulfur from thiocarboxylated URM1 onto the uridine of tRNAs at wobble position. This Drosophila mojavensis (Fruit fly) protein is Cytoplasmic tRNA 2-thiolation protein 2.